Here is a 218-residue protein sequence, read N- to C-terminus: MVKDDKLVPSIRLLTPNELSEQWANPNSEINQITRAVLTIQGIDLKAIDLNQAAQIIYFCQANNLNPLNKEVYLIQMGNRLAPIVGIHTMTERAYRTERLVGIVQSYNDVNKSAKTILTIRSPGLKGLGTVEAEVFLSEYSTNKNLWLTKPITMLKKVSLAHALRLSGLLAFKGDTPYIYEEMQQGEAVPNKKMFTPPVAEVIEPAVENIKKVDFNEF.

This is an uncharacterized protein from Ureaplasma parvum serovar 3 (strain ATCC 700970).